The sequence spans 425 residues: 3-phosphoshikimate 1-carboxyvinyltransferase (425 aa).

3-phosphoshikimate-binding residues include Lys-22, Ser-23, and Arg-27. A phosphoenolpyruvate-binding site is contributed by Lys-22. Phosphoenolpyruvate-binding residues include Gly-95 and Arg-123. The 3-phosphoshikimate site is built by Ser-169, Ser-170, Gln-171, Ser-197, Asp-313, Asn-336, and Lys-340. Gln-171 provides a ligand contact to phosphoenolpyruvate. Asp-313 (proton acceptor) is an active-site residue. Arg-344, Arg-386, and Lys-411 together coordinate phosphoenolpyruvate.

It belongs to the EPSP synthase family. As to quaternary structure, monomer.

It is found in the cytoplasm. It carries out the reaction 3-phosphoshikimate + phosphoenolpyruvate = 5-O-(1-carboxyvinyl)-3-phosphoshikimate + phosphate. The protein operates within metabolic intermediate biosynthesis; chorismate biosynthesis; chorismate from D-erythrose 4-phosphate and phosphoenolpyruvate: step 6/7. Catalyzes the transfer of the enolpyruvyl moiety of phosphoenolpyruvate (PEP) to the 5-hydroxyl of shikimate-3-phosphate (S3P) to produce enolpyruvyl shikimate-3-phosphate and inorganic phosphate. The polypeptide is 3-phosphoshikimate 1-carboxyvinyltransferase (Marinomonas sp. (strain MWYL1)).